The chain runs to 96 residues: Integration host factor subunit beta (96 aa).

The protein belongs to the bacterial histone-like protein family. As to quaternary structure, heterodimer of an alpha and a beta chain.

Its function is as follows. This protein is one of the two subunits of integration host factor, a specific DNA-binding protein that functions in genetic recombination as well as in transcriptional and translational control. This chain is Integration host factor subunit beta, found in Photobacterium profundum (strain SS9).